The sequence spans 168 residues: Transcription antitermination protein NusB (168 aa).

This sequence belongs to the NusB family.

Its function is as follows. Involved in transcription antitermination. Required for transcription of ribosomal RNA (rRNA) genes. Binds specifically to the boxA antiterminator sequence of the ribosomal RNA (rrn) operons. This chain is Transcription antitermination protein NusB, found in Chlamydia trachomatis serovar D (strain ATCC VR-885 / DSM 19411 / UW-3/Cx).